We begin with the raw amino-acid sequence, 115 residues long: Large ribosomal subunit protein bL19 (115 aa).

It belongs to the bacterial ribosomal protein bL19 family.

Functionally, this protein is located at the 30S-50S ribosomal subunit interface and may play a role in the structure and function of the aminoacyl-tRNA binding site. This chain is Large ribosomal subunit protein bL19, found in Lactobacillus acidophilus (strain ATCC 700396 / NCK56 / N2 / NCFM).